We begin with the raw amino-acid sequence, 391 residues long: Histidinol-phosphate aminotransferase (391 aa).

The residue at position 245 (K245) is an N6-(pyridoxal phosphate)lysine.

This sequence belongs to the class-II pyridoxal-phosphate-dependent aminotransferase family. Histidinol-phosphate aminotransferase subfamily. As to quaternary structure, homodimer. Requires pyridoxal 5'-phosphate as cofactor.

It carries out the reaction L-histidinol phosphate + 2-oxoglutarate = 3-(imidazol-4-yl)-2-oxopropyl phosphate + L-glutamate. It participates in amino-acid biosynthesis; L-histidine biosynthesis; L-histidine from 5-phospho-alpha-D-ribose 1-diphosphate: step 7/9. The polypeptide is Histidinol-phosphate aminotransferase (Bifidobacterium adolescentis (strain ATCC 15703 / DSM 20083 / NCTC 11814 / E194a)).